The primary structure comprises 112 residues: Large ribosomal subunit protein uL22 (112 aa).

Belongs to the universal ribosomal protein uL22 family. Part of the 50S ribosomal subunit.

This protein binds specifically to 23S rRNA; its binding is stimulated by other ribosomal proteins, e.g. L4, L17, and L20. It is important during the early stages of 50S assembly. It makes multiple contacts with different domains of the 23S rRNA in the assembled 50S subunit and ribosome. Its function is as follows. The globular domain of the protein is located near the polypeptide exit tunnel on the outside of the subunit, while an extended beta-hairpin is found that lines the wall of the exit tunnel in the center of the 70S ribosome. This chain is Large ribosomal subunit protein uL22, found in Mesoplasma florum (strain ATCC 33453 / NBRC 100688 / NCTC 11704 / L1) (Acholeplasma florum).